An 810-amino-acid chain; its full sequence is MPMDVILVLWFCVCTARTVLGFGMDPDLQMDIITELDLVNTTLGVTQVAGLHNASKAFLFQDVQREIHSAPHVSEKLIQLFRNKSEFTFLATVQQKPSTSGVILSIRELEHSYFELESSGPREEIRYHYIHGGKPRTEALPYRMADGQWHKVALSVSASHLLLHVDCNRIYERVIDPPETNLPPGSNLWLGQRNQKHGFFKGIIQDGKIIFMPNGFITQCPNLNRTCPTCSDFLSLVQGIMDLQELLAKMTAKLNYAETRLGQLENCHCEKTCQVSGLLYRDQDSWVDGDNCRNCTCKSGAVECRRMSCPPLNCSPDSLPVHISGQCCKVCRPKCIYGGKVLAEGQRILTKTCRECRGGVLVKITEACPPLNCSEKDHILPENQCCRVCRGHNFCAEAPKCGENSECKNWNTKATCECKNGYISVQGNSAYCEDIDECAAKMHYCHANTVCVNLPGLYRCDCIPGYIRVDDFSCTEHDDCGSGQHNCDKNAICTNTVQGHSCTCQPGYVGNGTVCKAFCEEGCRYGGTCVAPNKCVCPSGFTGSHCEKDIDECAEGFVECHNHSRCVNLPGWYHCECRSGFHDDGTYSLSGESCIDIDECALRTHTCWNDSACINLAGGFDCLCPSGPSCSGDCPHEGGLKHNGQVWILREDRCSVCSCKDGKIFCRRTACDCQNPNVDLFCCPECDTRVTSQCLDQSGQKLYRSGDNWTHSCQQCRCLEGEADCWPLACPSLSCEYTAIFEGECCPRCVSDPCLADNIAYDIRKTCLDSSGISRLSGAVWTMAGSPCTTCQCKNGRVCCSVDLVCLENN.

Positions 1–21 (MPMDVILVLWFCVCTARTVLG) are cleaved as a signal peptide. N-linked (GlcNAc...) asparagine glycans are attached at residues N40, N53, N83, N224, N294, and N372. In terms of domain architecture, Laminin G-like spans 57–227 (AFLFQDVQRE…TQCPNLNRTC (171 aa)). In terms of domain architecture, VWFC 1 spans 271–332 (KTCQVSGLLY…ISGQCCKVCR (62 aa)). 3 cysteine pairs are disulfide-bonded: C395–C407, C401–C416, and C418–C432. D434, I435, and E437 together coordinate Ca(2+). The region spanning 434 to 475 (DIDECAAKMHYCHANTVCVNLPGLYRCDCIPGYIRVDDFSCT) is the EGF-like 1; calcium-binding domain. 15 disulfide bridges follow: C438–C451, C445–C460, C462–C474, C480–C493, C487–C502, C504–C515, C519–C529, C523–C535, C537–C546, C553–C566, C560–C575, C577–C594, C600–C613, C607–C622, and C624–C630. Residues N453, L454, and L457 each coordinate Ca(2+). In terms of domain architecture, EGF-like 2; calcium-binding spans 476 to 516 (EHDDCGSGQHNCDKNAICTNTVQGHSCTCQPGYVGNGTVCK). A glycan (N-linked (GlcNAc...) asparagine) is linked at N511. The region spanning 517–547 (AFCEEGCRYGGTCVAPNKCVCPSGFTGSHCE) is the EGF-like 3 domain. The EGF-like 4; calcium-binding domain maps to 549-587 (DIDECAEGFVECHNHSRCVNLPGWYHCECRSGFHDDGTY). N562 is a glycosylation site (N-linked (GlcNAc...) asparagine). Positions 596 to 631 (DIDECALRTHTCWNDSACINLAGGFDCLCPSGPSCS) constitute an EGF-like 5; calcium-binding domain. N-linked (GlcNAc...) asparagine glycosylation is present at N609. 2 consecutive VWFC domains span residues 632 to 687 (GDCP…PECD) and 692 to 750 (SQCL…PRCV). N708 is a glycosylation site (N-linked (GlcNAc...) asparagine).

In terms of assembly, homotrimer. Binds to PKC beta-1. Interacts with ATRAID; the interaction promotes osteoblast cell differentiation and mineralization. Interacts with ROBO3.

It is found in the cytoplasm. The protein resides in the nucleus envelope. The protein localises to the secreted. In terms of biological role, plays a role in the control of cell growth and differentiation. Promotes osteoblast cell differentiation and terminal mineralization. In Mus musculus (Mouse), this protein is Protein kinase C-binding protein NELL1 (Nell1).